Consider the following 351-residue polypeptide: tRNA-specific 2-thiouridylase MnmA (351 aa).

ATP contacts are provided by residues 7-14 and Leu-33; that span reads GLSGGVDS. The Nucleophile role is filled by Cys-94. A disulfide bridge links Cys-94 with Cys-193. Gly-119 contacts ATP. The interval 143-145 is interaction with tRNA; that stretch reads KDQ. Cys-193 (cysteine persulfide intermediate) is an active-site residue. The interaction with tRNA stretch occupies residues 298–299; sequence RY.

This sequence belongs to the MnmA/TRMU family.

The protein localises to the cytoplasm. The enzyme catalyses S-sulfanyl-L-cysteinyl-[protein] + uridine(34) in tRNA + AH2 + ATP = 2-thiouridine(34) in tRNA + L-cysteinyl-[protein] + A + AMP + diphosphate + H(+). Functionally, catalyzes the 2-thiolation of uridine at the wobble position (U34) of tRNA, leading to the formation of s(2)U34. The chain is tRNA-specific 2-thiouridylase MnmA from Nostoc punctiforme (strain ATCC 29133 / PCC 73102).